A 210-amino-acid polypeptide reads, in one-letter code: Protein SgcE (210 aa).

Substrate is bound at residue Ser6. A divalent metal cation contacts are provided by His31, Asp33, and His64. Catalysis depends on Asp33, which acts as the Proton acceptor. Substrate contacts are provided by residues His64, Asp140–Gly143, Asp169–Gly171, and Gly191–Arg192. Position 169 (Asp169) interacts with a divalent metal cation. Residue Asp169 is the Proton donor of the active site.

The protein belongs to the ribulose-phosphate 3-epimerase family. The cofactor is Co(2+). It depends on Fe(2+) as a cofactor. Mn(2+) serves as cofactor. Requires Zn(2+) as cofactor.

It participates in carbohydrate degradation. Probable pentose-5-phosphate 3-epimerase. The polypeptide is Protein SgcE (sgcE) (Escherichia coli (strain K12)).